A 290-amino-acid chain; its full sequence is Ribosomal RNA small subunit methyltransferase A (290 aa).

Residues Asn27, Leu29, Gly54, Glu75, Asp100, and Asn125 each coordinate S-adenosyl-L-methionine.

The protein belongs to the class I-like SAM-binding methyltransferase superfamily. rRNA adenine N(6)-methyltransferase family. RsmA subfamily.

It localises to the cytoplasm. The enzyme catalyses adenosine(1518)/adenosine(1519) in 16S rRNA + 4 S-adenosyl-L-methionine = N(6)-dimethyladenosine(1518)/N(6)-dimethyladenosine(1519) in 16S rRNA + 4 S-adenosyl-L-homocysteine + 4 H(+). Functionally, specifically dimethylates two adjacent adenosines (A1518 and A1519) in the loop of a conserved hairpin near the 3'-end of 16S rRNA in the 30S particle. May play a critical role in biogenesis of 30S subunits. In Streptococcus uberis (strain ATCC BAA-854 / 0140J), this protein is Ribosomal RNA small subunit methyltransferase A.